The sequence spans 229 residues: 7-cyano-7-deazaguanine synthase (229 aa).

Position 7-17 (7-17) interacts with ATP; sequence LSGGLDSTTVL. The Zn(2+) site is built by Cys-191, Cys-204, Cys-207, and Cys-210.

Belongs to the QueC family. It depends on Zn(2+) as a cofactor.

It carries out the reaction 7-carboxy-7-deazaguanine + NH4(+) + ATP = 7-cyano-7-deazaguanine + ADP + phosphate + H2O + H(+). It functions in the pathway purine metabolism; 7-cyano-7-deazaguanine biosynthesis. In terms of biological role, catalyzes the ATP-dependent conversion of 7-carboxy-7-deazaguanine (CDG) to 7-cyano-7-deazaguanine (preQ(0)). This Cyanothece sp. (strain PCC 7425 / ATCC 29141) protein is 7-cyano-7-deazaguanine synthase.